The chain runs to 144 residues: Large ribosomal subunit protein uL15 (144 aa).

Over residues 1–13 (MVRERTKKLRGGH) the composition is skewed to basic residues. The disordered stretch occupies residues 1–32 (MVRERTKKLRGGHYGRGFKAGRGKGKKGGSGN).

The protein belongs to the universal ribosomal protein uL15 family. Part of the 50S ribosomal subunit.

Its function is as follows. Binds to the 23S rRNA. The protein is Large ribosomal subunit protein uL15 of Thermoplasma acidophilum (strain ATCC 25905 / DSM 1728 / JCM 9062 / NBRC 15155 / AMRC-C165).